The sequence spans 176 residues: Isopentenyl-diphosphate Delta-isomerase 1 (176 aa).

Mn(2+) is bound by residues His-23 and His-30. The 135-residue stretch at 28–162 (HLHRAFSCFI…EEFCTPWFKK (135 aa)) folds into the Nudix hydrolase domain. Residue Cys-65 is part of the active site. Cys-65 is a binding site for Mg(2+). His-67 serves as a coordination point for Mn(2+). Residue Glu-85 participates in Mg(2+) binding. Mn(2+)-binding residues include Glu-112 and Glu-114. Glu-114 is a catalytic residue.

This sequence belongs to the IPP isomerase type 1 family. As to quaternary structure, homodimer. Mg(2+) serves as cofactor. The cofactor is Mn(2+).

It is found in the cytoplasm. The catalysed reaction is isopentenyl diphosphate = dimethylallyl diphosphate. The protein operates within isoprenoid biosynthesis; dimethylallyl diphosphate biosynthesis; dimethylallyl diphosphate from isopentenyl diphosphate: step 1/1. Its function is as follows. Catalyzes the 1,3-allylic rearrangement of the homoallylic substrate isopentenyl (IPP) to its highly electrophilic allylic isomer, dimethylallyl diphosphate (DMAPP). The protein is Isopentenyl-diphosphate Delta-isomerase 1 of Photorhabdus laumondii subsp. laumondii (strain DSM 15139 / CIP 105565 / TT01) (Photorhabdus luminescens subsp. laumondii).